We begin with the raw amino-acid sequence, 279 residues long: Dehydrogenase/reductase SDR family member 4 (279 aa).

An NADP(+)-binding site is contributed by 37 to 61 (LVTASTDGIGFAIARRLAQDGAHVV). At K93 the chain carries N6-acetyllysine; alternate. N6-succinyllysine; alternate is present on K93. K106 bears the N6-acetyllysine mark. Residue S170 coordinates substrate. The active-site Proton acceptor is Y183. Residue K187 coordinates NADP(+). S221 is modified (phosphoserine). K235 carries the post-translational modification N6-succinyllysine. The Peroxisomal targeting signal motif lies at 277 to 279 (SHL).

The protein belongs to the short-chain dehydrogenases/reductases (SDR) family. As to quaternary structure, homotetramer.

The protein localises to the peroxisome. The catalysed reaction is a secondary alcohol + NADP(+) = a ketone + NADPH + H(+). It catalyses the reaction 3alpha-hydroxy-5beta-pregnan-20-one + NADP(+) = 5beta-pregnan-3,20-dione + NADPH + H(+). The enzyme catalyses 5beta-dihydrotestosterone + NADPH + H(+) = 5beta-androstane-3alpha,17beta-diol + NADP(+). It carries out the reaction all-trans-retinol + NADP(+) = all-trans-retinal + NADPH + H(+). The catalysed reaction is isatin + NADPH + H(+) = 3-hydroxyindolin-2-one + NADP(+). Its function is as follows. NADPH-dependent oxidoreductase which catalyzes the reduction of a variety of compounds bearing carbonyl groups including ketosteroids, alpha-dicarbonyl compounds, aldehydes, aromatic ketones and quinones. Reduces all-trans-retinal and 9-cis retinal. Reduces 3-ketosteroids and benzil into 3alpha-hydroxysteroids and S-benzoin, respectively, in contrast to the stereoselectivity of primates DHRS4s which produce 3beta-hydroxysteroids and R-benzoin. In the reverse reaction, catalyzes the NADP-dependent oxidation of 3alpha-hydroxysteroids and alcohol, but with much lower efficiency. Involved in the metabolism of 3alpha-hydroxysteroids, retinoid, isatin and xenobiotic carbonyl compounds. In Bos taurus (Bovine), this protein is Dehydrogenase/reductase SDR family member 4 (DHRS4).